Reading from the N-terminus, the 148-residue chain is Proline-rich protein 13 (148 aa).

The segment at M1–D148 is disordered. 2 stretches are compositionally biased toward pro residues: residues A27–G67 and G75–P93. Over residues M109–H135 the composition is skewed to basic residues. The span at S136 to D148 shows a compositional bias: low complexity.

It localises to the nucleus. In terms of biological role, negatively regulates TSP1 expression at the level of transcription. This down-regulation was shown to reduce taxane-induced apoptosis. This Homo sapiens (Human) protein is Proline-rich protein 13 (PRR13).